The sequence spans 152 residues: Actin-related protein 2/3 complex subunit 5-B (152 aa).

The disordered stretch occupies residues 21–44; it reads NKFVDDQLQEEPAEPQGPDEAEVD. Residues 27–43 are compositionally biased toward acidic residues; that stretch reads QLQEEPAEPQGPDEAEV.

It belongs to the ARPC5 family. In terms of assembly, component of the Arp2/3 complex composed of actr2/arp2, actr3/arp3, arpc1 (arpc1a or arpc1b), arpc2, arpc3, arpc4 and arpc5.

The protein resides in the cytoplasm. Its subcellular location is the cytoskeleton. The protein localises to the cell projection. It localises to the nucleus. Functionally, component of the Arp2/3 complex, a multiprotein complex that mediates actin polymerization upon stimulation by nucleation-promoting factor (NPF). The Arp2/3 complex mediates the formation of branched actin networks in the cytoplasm, providing the force for cell motility. In addition to its role in the cytoplasmic cytoskeleton, the Arp2/3 complex also promotes actin polymerization in the nucleus, thereby regulating gene transcription and repair of damaged DNA. The Arp2/3 complex promotes homologous recombination (HR) repair in response to DNA damage by promoting nuclear actin polymerization, leading to drive motility of double-strand breaks (DSBs). In Xenopus laevis (African clawed frog), this protein is Actin-related protein 2/3 complex subunit 5-B (arpc5-b).